Here is a 91-residue protein sequence, read N- to C-terminus: Acylphosphatase (91 aa).

One can recognise an Acylphosphatase-like domain in the interval 3 to 90 (QYRIIVDGRV…EGHHRFSIVY (88 aa)). Residues Arg-18 and Asn-36 contribute to the active site.

The protein belongs to the acylphosphatase family.

The catalysed reaction is an acyl phosphate + H2O = a carboxylate + phosphate + H(+). The sequence is that of Acylphosphatase (acyP) from Bacillus subtilis (strain 168).